Reading from the N-terminus, the 347-residue chain is Protein-glutamate methylesterase/protein-glutamine glutaminase 4 (347 aa).

The region spanning 3–121 (KVLIVDDSAS…HPNHEREARS (119 aa)) is the Response regulatory domain. Aspartate 54 carries the 4-aspartylphosphate modification. The CheB-type methylesterase domain maps to 157–342 (PARLKAVAIG…PDRIVTALTS (186 aa)). Residues serine 168, histidine 195, and aspartate 289 contribute to the active site.

The protein belongs to the CheB family. Phosphorylated by CheA. Phosphorylation of the N-terminal regulatory domain activates the methylesterase activity.

It localises to the cytoplasm. It catalyses the reaction [protein]-L-glutamate 5-O-methyl ester + H2O = L-glutamyl-[protein] + methanol + H(+). The catalysed reaction is L-glutaminyl-[protein] + H2O = L-glutamyl-[protein] + NH4(+). Its function is as follows. Involved in chemotaxis. Part of a chemotaxis signal transduction system that modulates chemotaxis in response to various stimuli. Catalyzes the demethylation of specific methylglutamate residues introduced into the chemoreceptors (methyl-accepting chemotaxis proteins or MCP) by CheR. Also mediates the irreversible deamidation of specific glutamine residues to glutamic acid. The chain is Protein-glutamate methylesterase/protein-glutamine glutaminase 4 from Geobacter metallireducens (strain ATCC 53774 / DSM 7210 / GS-15).